We begin with the raw amino-acid sequence, 601 residues long: A-type ATP synthase subunit A (601 aa).

Position 235 to 242 (235 to 242 (GGFGTGKT)) interacts with ATP.

Belongs to the ATPase alpha/beta chains family. In terms of assembly, has multiple subunits with at least A(3), B(3), C, D, E, F, H, I and proteolipid K(x).

The protein localises to the cell membrane. The catalysed reaction is ATP + H2O + 4 H(+)(in) = ADP + phosphate + 5 H(+)(out). Component of the A-type ATP synthase that produces ATP from ADP in the presence of a proton gradient across the membrane. The A chain is the catalytic subunit. The sequence is that of A-type ATP synthase subunit A from Thermofilum pendens (strain DSM 2475 / Hrk 5).